We begin with the raw amino-acid sequence, 489 residues long: Mitochondrial distribution and morphology protein 12 (489 aa).

The SMP-LTD domain maps to 1–489; that stretch reads MSIDLNWEAA…VFPSFWTFLV (489 aa). Acidic residues predominate over residues 72–82; sequence ESDSEDEDEGH. Disordered stretches follow at residues 72–97, 201–313, and 394–432; these read ESDS…AAAD, WPDA…MRER, and DINH…QPRR. Positions 231–249 are enriched in polar residues; sequence LDTGSPSRPSTANTNPTQL. Low complexity-rich tracts occupy residues 250-265 and 398-424; these read SHGQ…NTSN and QQRQ…NNPE.

Belongs to the MDM12 family. As to quaternary structure, component of the ER-mitochondria encounter structure (ERMES) or MDM complex, composed of MMM1, MDM10, mdm12 and MDM34. An MMM1 homodimer associates with one molecule of mdm12 on each side in a pairwise head-to-tail manner, and the SMP-LTD domains of MMM1 and mdm12 generate a continuous hydrophobic tunnel for phospholipid trafficking.

Its subcellular location is the mitochondrion outer membrane. It is found in the endoplasmic reticulum membrane. Functionally, component of the ERMES/MDM complex, which serves as a molecular tether to connect the endoplasmic reticulum (ER) and mitochondria. Components of this complex are involved in the control of mitochondrial shape and protein biogenesis, and function in nonvesicular lipid trafficking between the ER and mitochondria. mdm12 is required for the interaction of the ER-resident membrane protein MMM1 and the outer mitochondrial membrane-resident beta-barrel protein MDM10. The mdm12-MMM1 subcomplex functions in the major beta-barrel assembly pathway that is responsible for biogenesis of all mitochondrial outer membrane beta-barrel proteins, and acts in a late step after the SAM complex. The MDM10-mdm12-MMM1 subcomplex further acts in the TOM40-specific pathway after the action of the mdm12-MMM1 complex. Essential for establishing and maintaining the structure of mitochondria and maintenance of mtDNA nucleoids. The chain is Mitochondrial distribution and morphology protein 12 from Talaromyces marneffei (strain ATCC 18224 / CBS 334.59 / QM 7333) (Penicillium marneffei).